We begin with the raw amino-acid sequence, 158 residues long: Osmosensory protein A (158 aa).

T2 is modified (phosphothreonine; by PknD). Positions 28-139 (AQIRAYLHHL…RSVHKALHDL (112 aa)) constitute an STAS domain.

The protein belongs to the anti-sigma-factor antagonist family. Interacts with Rv2638. Phosphorylation abolishes binding to Rv2638. Post-translationally, phosphorylated on Thr-2 by the serine/threonine-protein kinase PknD. Also phosphorylated to a lesser extent by PknB and PknE. Dephosphorylated by PstP.

Regulated by PknD under osmotic stress. Functionally, part of a signaling pathway that enables adaptation to osmotic stress through cell wall remodeling and virulence factor production. Unphosphorylated OprA forms a complex with the anti-anti-sigma-factor paralog Rv2638 that dissociates on OprA phosphorylation by PknD. Phosphorylation of OprA may stimulate the release of SigF from an inhibitory complex and enable the transcription of osmotically regulated genes, such as oprA and the ESX-1-associated virulence factor espA. The sequence is that of Osmosensory protein A from Mycobacterium tuberculosis (strain ATCC 25618 / H37Rv).